The following is a 272-amino-acid chain: Alkaline ceramidase (272 aa).

A run of 2 helical transmembrane segments spans residues 34–54 (FANTCTNLPIIVLPLVNIMLL) and 61–81 (VNGGLVFPQLLLTFNGLASTY). His83 lines the Zn(2+) pocket. The next 4 helical transmembrane spans lie at 96–116 (LSLVWIITVFLVVYIPVMKWF), 124–144 (LTVVRWVVLIVTAVVSALCFL), 148–168 (LNAIALMLFSIPAAVVIRYEG), and 183–203 (ILALWGVAFSFWFADRLLCDF). The Zn(2+) site is built by His213 and His217. The helical transmembrane segment at 214-234 (ALFHLLAGLAGYTIFIMFSMI) threads the bilayer. An N-linked (GlcNAc...) asparagine glycan is attached at Asn256.

Belongs to the alkaline ceramidase family. The cofactor is Zn(2+).

The protein localises to the membrane. It catalyses the reaction an N-acylsphing-4-enine + H2O = sphing-4-enine + a fatty acid. In terms of biological role, hydrolyzes the sphingolipid ceramide into sphingosine and free fatty acid. The protein is Alkaline ceramidase of Caenorhabditis briggsae.